The following is a 241-amino-acid chain: 1-(5-phosphoribosyl)-5-[(5-phosphoribosylamino)methylideneamino] imidazole-4-carboxamide isomerase (241 aa).

The active-site Proton acceptor is the Asp10. Residue Asp131 is the Proton donor of the active site.

It belongs to the HisA/HisF family.

It localises to the cytoplasm. The enzyme catalyses 1-(5-phospho-beta-D-ribosyl)-5-[(5-phospho-beta-D-ribosylamino)methylideneamino]imidazole-4-carboxamide = 5-[(5-phospho-1-deoxy-D-ribulos-1-ylimino)methylamino]-1-(5-phospho-beta-D-ribosyl)imidazole-4-carboxamide. It functions in the pathway amino-acid biosynthesis; L-histidine biosynthesis; L-histidine from 5-phospho-alpha-D-ribose 1-diphosphate: step 4/9. The protein is 1-(5-phosphoribosyl)-5-[(5-phosphoribosylamino)methylideneamino] imidazole-4-carboxamide isomerase of Bifidobacterium longum (strain DJO10A).